The chain runs to 456 residues: Bifunctional protein GlmU (456 aa).

Residues 1–228 are pyrophosphorylase; the sequence is MPQNTLNTVI…SHLAAGVNNK (228 aa). UDP-N-acetyl-alpha-D-glucosamine is bound by residues 11 to 14, lysine 25, glutamine 75, 80 to 81, 102 to 104, glycine 138, glutamate 153, asparagine 168, and asparagine 226; these read LAAG, GT, and YGD. Aspartate 104 serves as a coordination point for Mg(2+). A Mg(2+)-binding site is contributed by asparagine 226. The interval 229–249 is linker; it reads RQLAELERIFQTEQAQELLKA. Positions 250–456 are N-acetyltransferase; it reads GVTLRDPARF…GWMRPEKDKQ (207 aa). UDP-N-acetyl-alpha-D-glucosamine-binding residues include arginine 332 and lysine 350. Catalysis depends on histidine 362, which acts as the Proton acceptor. UDP-N-acetyl-alpha-D-glucosamine-binding residues include tyrosine 365 and asparagine 376. Residues alanine 379, 385-386, serine 404, alanine 422, and arginine 439 contribute to the acetyl-CoA site; that span reads NY.

The protein in the N-terminal section; belongs to the N-acetylglucosamine-1-phosphate uridyltransferase family. In the C-terminal section; belongs to the transferase hexapeptide repeat family. Homotrimer. It depends on Mg(2+) as a cofactor.

Its subcellular location is the cytoplasm. It carries out the reaction alpha-D-glucosamine 1-phosphate + acetyl-CoA = N-acetyl-alpha-D-glucosamine 1-phosphate + CoA + H(+). The catalysed reaction is N-acetyl-alpha-D-glucosamine 1-phosphate + UTP + H(+) = UDP-N-acetyl-alpha-D-glucosamine + diphosphate. The protein operates within nucleotide-sugar biosynthesis; UDP-N-acetyl-alpha-D-glucosamine biosynthesis; N-acetyl-alpha-D-glucosamine 1-phosphate from alpha-D-glucosamine 6-phosphate (route II): step 2/2. Its pathway is nucleotide-sugar biosynthesis; UDP-N-acetyl-alpha-D-glucosamine biosynthesis; UDP-N-acetyl-alpha-D-glucosamine from N-acetyl-alpha-D-glucosamine 1-phosphate: step 1/1. It participates in bacterial outer membrane biogenesis; LPS lipid A biosynthesis. In terms of biological role, catalyzes the last two sequential reactions in the de novo biosynthetic pathway for UDP-N-acetylglucosamine (UDP-GlcNAc). The C-terminal domain catalyzes the transfer of acetyl group from acetyl coenzyme A to glucosamine-1-phosphate (GlcN-1-P) to produce N-acetylglucosamine-1-phosphate (GlcNAc-1-P), which is converted into UDP-GlcNAc by the transfer of uridine 5-monophosphate (from uridine 5-triphosphate), a reaction catalyzed by the N-terminal domain. The polypeptide is Bifunctional protein GlmU (Neisseria gonorrhoeae (strain ATCC 700825 / FA 1090)).